The following is a 136-amino-acid chain: MLSPKRVKFRKQHRGRMKGISTRGNQICSGKFAPQALEPAWITSRQIEAGRRAISRYARRGGKIWIRIFPDKPVTMRPAETRMGSGKGSPEFWVSVVKPNRILYEIGGVPEDIAKAAIRIAAYKMPIRTQFIILHL.

The span at 1–17 (MLSPKRVKFRKQHRGRM) shows a compositional bias: basic residues. The segment at 1-25 (MLSPKRVKFRKQHRGRMKGISTRGN) is disordered.

This sequence belongs to the universal ribosomal protein uL16 family. In terms of assembly, part of the 50S ribosomal subunit.

It is found in the plastid. The protein localises to the chloroplast. This Anthoceros angustus (Hornwort) protein is Large ribosomal subunit protein uL16c.